The sequence spans 61 residues: Small ribosomal subunit protein uS14C (61 aa).

Zn(2+) contacts are provided by Cys24, Cys27, Cys40, and Cys43.

The protein belongs to the universal ribosomal protein uS14 family. Zinc-binding uS14 subfamily. Part of the 30S ribosomal subunit. Contacts proteins S3 and S10. It depends on Zn(2+) as a cofactor.

Binds 16S rRNA, required for the assembly of 30S particles and may also be responsible for determining the conformation of the 16S rRNA at the A site. This Enterococcus faecalis (strain ATCC 700802 / V583) protein is Small ribosomal subunit protein uS14C.